Reading from the N-terminus, the 525-residue chain is GMP synthase [glutamine-hydrolyzing] (525 aa).

One can recognise a Glutamine amidotransferase type-1 domain in the interval 9 to 207 (RVLILDFGSQ…VLEIAGCEPL (199 aa)). Cys86 (nucleophile) is an active-site residue. Active-site residues include His181 and Glu183. Residues 208-400 (WTPANIVEDA…LGLPYDMVYR (193 aa)) form the GMPS ATP-PPase domain. ATP is bound at residue 235–241 (SGGVDSS).

As to quaternary structure, homodimer.

It carries out the reaction XMP + L-glutamine + ATP + H2O = GMP + L-glutamate + AMP + diphosphate + 2 H(+). It participates in purine metabolism; GMP biosynthesis; GMP from XMP (L-Gln route): step 1/1. Its function is as follows. Catalyzes the synthesis of GMP from XMP. The protein is GMP synthase [glutamine-hydrolyzing] of Teredinibacter turnerae (strain ATCC 39867 / T7901).